Reading from the N-terminus, the 1657-residue chain is Thrombospondin type-1 domain-containing protein 7A (1657 aa).

Residues 1-47 form the signal peptide; sequence MGLQARRWASGSRGAAGPRRGVLQLLPLPLPLPLLLLLLLRPGAGRA. Residues 48–1607 lie on the Extracellular side of the membrane; sequence AAQGEAEAPT…FGPDGRLKTW (1560 aa). TSP type-1 domains lie at 57–116, 120–192, and 194–247; these read TLYL…KVCD, ELYD…IPCQ, and DCIV…SPCE. N-linked (GlcNAc...) asparagine glycosylation is present at Asn-234. Residues 265-311 are disordered; sequence MPHSRQVRQARRRGKNKEREKDRSKGVKDPEARELIKKKRNRNRQNR. Residues 267 to 315 are a coiled coil; the sequence is HSRQVRQARRRGKNKEREKDRSKGVKDPEARELIKKKRNRNRQNRQENK. Basic residues predominate over residues 269–280; that stretch reads RQVRQARRRGKN. The segment covering 281–299 has biased composition (basic and acidic residues); the sequence is KEREKDRSKGVKDPEAREL. Basic residues predominate over residues 300-309; sequence IKKKRNRNRQ. Asn-332 is a glycosylation site (N-linked (GlcNAc...) asparagine). TSP type-1 domains follow at residues 360-416, 423-510, 512-574, 634-695, 696-769, 771-831, 832-904, 906-959, 960-1033, 1035-1095, 1096-1163, 1166-1220, 1221-1284, 1286-1341, 1342-1412, and 1414-1475; these read ECQV…LSQG, ATYG…IPCP, ECEV…PACY, DCVL…HPCT, VYHW…LPCK, DCIV…QACQ, SYRW…IPCQ, DCQL…CPCD, KYNA…IPCP, DCKL…SDCN, QYLW…LPCP, CVIS…KNCY, HYDY…VECP, NCQL…KPCY, RWQY…QPCP, and DCYL…GQCY. 3 disulfides stabilise this stretch: Cys-435–Cys-505, Cys-455–Cys-509, and Cys-466–Cys-494. Residue Asn-450 is glycosylated (N-linked (GlcNAc...) asparagine). An N-linked (GlcNAc...) asparagine glycan is attached at Asn-500. Disulfide bonds link Cys-635–Cys-677 and Cys-646–Cys-650. N-linked (GlcNAc...) asparagine glycosylation is present at Asn-679. Intrachain disulfides connect Cys-689–Cys-694, Cys-707–Cys-764, Cys-728–Cys-768, Cys-739–Cys-752, Cys-772–Cys-814, Cys-783–Cys-787, and Cys-824–Cys-830. A glycan (N-linked (GlcNAc...) asparagine) is linked at Asn-717. A glycan (N-linked (GlcNAc...) asparagine) is linked at Asn-968. Intrachain disulfides connect Cys-972-Cys-1028, Cys-994-Cys-1032, Cys-1005-Cys-1018, Cys-1036-Cys-1073, Cys-1047-Cys-1051, and Cys-1090-Cys-1094. Residue Asn-1043 is glycosylated (N-linked (GlcNAc...) asparagine). A glycan (N-linked (GlcNAc...) asparagine) is linked at Asn-1182. Residues Cys-1213 and Cys-1219 are joined by a disulfide bond. A glycan (N-linked (GlcNAc...) asparagine) is linked at Asn-1225. Cystine bridges form between Cys-1232–Cys-1279, Cys-1240–Cys-1283, Cys-1251–Cys-1264, Cys-1287–Cys-1325, Cys-1298–Cys-1302, Cys-1335–Cys-1340, Cys-1351–Cys-1407, Cys-1358–Cys-1411, Cys-1369–Cys-1388, Cys-1415–Cys-1459, Cys-1426–Cys-1430, and Cys-1469–Cys-1474. A glycan (N-linked (GlcNAc...) asparagine) is linked at Asn-1276. A glycan (N-linked (GlcNAc...) asparagine) is linked at Asn-1366. N-linked (GlcNAc...) asparagine glycosylation is found at Asn-1500 and Asn-1547. The disordered stretch occupies residues 1570–1591; the sequence is DVKTSRAVHPTQPSSNPAGRGR. Residues 1608-1628 traverse the membrane as a helical segment; that stretch reads VYGVAAGAFVLLIFIVSMIYL. Over 1629 to 1657 the chain is Cytoplasmic; the sequence is ACKKPKKPQRRQNNRLKPLTLAYDGDADM.

Post-translationally, proteolytic cleavage in the extracellular region generates a 210 kDa soluble form. Extensively N-glycosylated. In terms of tissue distribution, detected on kidney podocytes along the glomerular capillary wall (at protein level).

The protein localises to the cell membrane. Its subcellular location is the cell projection. It localises to the secreted. In terms of biological role, plays a role in actin cytoskeleton rearrangement. Its function is as follows. The soluble form promotes endothelial cell migration and filopodia formation during sprouting angiogenesis via a FAK-dependent mechanism. The sequence is that of Thrombospondin type-1 domain-containing protein 7A (THSD7A) from Homo sapiens (Human).